A 372-amino-acid chain; its full sequence is Queuine tRNA-ribosyltransferase (372 aa).

The Proton acceptor role is filled by D89. Residues 89-93 (DSGGF), D161, and G232 contribute to the substrate site. The tract at residues 262-268 (GIGDLPS) is RNA binding. D281 acts as the Nucleophile in catalysis. The RNA binding; important for wobble base 34 recognition stretch occupies residues 286 to 290 (TKAAR). C319, C321, C324, and H351 together coordinate Zn(2+).

This sequence belongs to the queuine tRNA-ribosyltransferase family. In terms of assembly, homodimer. Within each dimer, one monomer is responsible for RNA recognition and catalysis, while the other monomer binds to the replacement base PreQ1. Requires Zn(2+) as cofactor.

It carries out the reaction 7-aminomethyl-7-carbaguanine + guanosine(34) in tRNA = 7-aminomethyl-7-carbaguanosine(34) in tRNA + guanine. Its pathway is tRNA modification; tRNA-queuosine biosynthesis. Functionally, catalyzes the base-exchange of a guanine (G) residue with the queuine precursor 7-aminomethyl-7-deazaguanine (PreQ1) at position 34 (anticodon wobble position) in tRNAs with GU(N) anticodons (tRNA-Asp, -Asn, -His and -Tyr). Catalysis occurs through a double-displacement mechanism. The nucleophile active site attacks the C1' of nucleotide 34 to detach the guanine base from the RNA, forming a covalent enzyme-RNA intermediate. The proton acceptor active site deprotonates the incoming PreQ1, allowing a nucleophilic attack on the C1' of the ribose to form the product. After dissociation, two additional enzymatic reactions on the tRNA convert PreQ1 to queuine (Q), resulting in the hypermodified nucleoside queuosine (7-(((4,5-cis-dihydroxy-2-cyclopenten-1-yl)amino)methyl)-7-deazaguanosine). This Chlamydia trachomatis serovar L2 (strain ATCC VR-902B / DSM 19102 / 434/Bu) protein is Queuine tRNA-ribosyltransferase.